The primary structure comprises 1011 residues: Liprin-beta-1 (1011 aa).

Serine 37 bears the Phosphoserine mark. Phosphothreonine is present on threonine 39. At serine 40 the chain carries Phosphoserine. The stretch at 156-405 forms a coiled coil; sequence QQELLSRTSL…VPEEFHTTIL (250 aa). The residue at position 322 (lysine 322) is an N6-acetyllysine. Disordered regions lie at residues 420–439 and 463–634; these read ETSEKSKLTPKPETSFEEND and KSSS…RDLG. Residues serine 434 and serine 466 each carry the phosphoserine modification. Residues 470–492 show a composition bias toward basic and acidic residues; that stretch reads LKKETSDGEKETIQKTSEDRAPA. A Glycyl lysine isopeptide (Lys-Gly) (interchain with G-Cter in SUMO2) cross-link involves residue lysine 471. Residues serine 523 and serine 540 each carry the phosphoserine modification. Residues 546 to 556 are compositionally biased toward basic and acidic residues; it reads ETEKETAEHLD. Serine 579 carries the phosphoserine modification. Residues 584-598 show a composition bias toward basic residues; the sequence is KKSRGIMKLFGKLRR. Phosphoserine occurs at positions 601 and 636. 2 SAM domains span residues 647 to 711 and 719 to 782; these read WTKE…LGSE and LDFN…LRIN. A Phosphoserine modification is found at serine 794. The SAM 3 domain maps to 804–876; the sequence is VQKWTNHRVM…ATHFNLLIGA (73 aa). Serine 999, serine 1001, and serine 1003 each carry phosphoserine. Threonine 1005 is subject to Phosphothreonine.

This sequence belongs to the liprin family. Liprin-beta subfamily. In terms of assembly, forms homodimers and heterodimers. Interacts with S100A4 in a Ca(2+)-dependent mode. Part of a cortical microtubule stabilization complex (CMSC) composed of KANK1, PPFIA1, PPFIBP1, ERC1/ELKS, PHLDB2/LL5beta, CLASPs, KIF21A and possibly additional interactors; within CMSCs KANK1 and PHLDB2/LL5beta seem to be the core components for recruiting microtubule-binding proteins KIF21A and CLASPs, whereas PPFIA1, PPFIBP1 and ERC1/ELKS serve as scaffolds for protein clustering. Interacts with KANK1 (via CC1 domain, residues 244-339). Widely expressed. Absent in liver.

It localises to the cytoplasm. The protein resides in the cell cortex. May regulate the disassembly of focal adhesions. Did not bind receptor-like tyrosine phosphatases type 2A. The polypeptide is Liprin-beta-1 (PPFIBP1) (Homo sapiens (Human)).